The chain runs to 240 residues: Thiopurine S-methyltransferase (240 aa).

24–35 (WKEKWVTRHISF) is a binding site for S-adenosyl-L-methionine. Ser-34 bears the Phosphoserine mark. A substrate-binding site is contributed by Phe-35. An N6-acetyllysine modification is found at Lys-53. S-adenosyl-L-methionine contacts are provided by residues Leu-64, Glu-85, 129–130 (SI), and Arg-147.

Belongs to the class I-like SAM-binding methyltransferase superfamily. TPMT family. As to quaternary structure, monomer.

The protein resides in the cytoplasm. It catalyses the reaction S-adenosyl-L-methionine + a thiopurine = S-adenosyl-L-homocysteine + a thiopurine S-methylether.. It carries out the reaction mercaptopurine + S-adenosyl-L-methionine = 6-methylthiopurine + S-adenosyl-L-homocysteine + H(+). In terms of biological role, catalyzes the S-methylation of thiopurine drugs such as 6-mercaptopurine (also called mercaptopurine, 6-MP or its brand name Purinethol) using S-adenosyl-L-methionine as the methyl donor. TPMT activity modulates the cytotoxic effects of thiopurine prodrugs. A natural substrate for this enzyme has yet to be identified. The polypeptide is Thiopurine S-methyltransferase (Tpmt) (Mus musculus (Mouse)).